A 172-amino-acid chain; its full sequence is ATP synthase subunit b (172 aa).

The chain crosses the membrane as a helical span at residues 17-37; it reads IVFSAIVLAIVLPFFWWFVIP.

It belongs to the ATPase B chain family. F-type ATPases have 2 components, F(1) - the catalytic core - and F(0) - the membrane proton channel. F(1) has five subunits: alpha(3), beta(3), gamma(1), delta(1), epsilon(1). F(0) has three main subunits: a(1), b(2) and c(10-14). The alpha and beta chains form an alternating ring which encloses part of the gamma chain. F(1) is attached to F(0) by a central stalk formed by the gamma and epsilon chains, while a peripheral stalk is formed by the delta and b chains.

It localises to the cell membrane. F(1)F(0) ATP synthase produces ATP from ADP in the presence of a proton or sodium gradient. F-type ATPases consist of two structural domains, F(1) containing the extramembraneous catalytic core and F(0) containing the membrane proton channel, linked together by a central stalk and a peripheral stalk. During catalysis, ATP synthesis in the catalytic domain of F(1) is coupled via a rotary mechanism of the central stalk subunits to proton translocation. Its function is as follows. Component of the F(0) channel, it forms part of the peripheral stalk, linking F(1) to F(0). The sequence is that of ATP synthase subunit b from Tropheryma whipplei (strain TW08/27) (Whipple's bacillus).